Reading from the N-terminus, the 676-residue chain is DNA ligase (676 aa).

NAD(+)-binding positions include 35–39 (DAVYD), 84–85 (SL), and E115. K117 acts as the N6-AMP-lysine intermediate in catalysis. NAD(+) contacts are provided by R138, E177, K296, and K320. Zn(2+) contacts are provided by C414, C417, C432, and C437. Positions 599 to 676 (NANLKLVGKT…SEAELLKILA (78 aa)) constitute a BRCT domain.

This sequence belongs to the NAD-dependent DNA ligase family. LigA subfamily. The cofactor is Mg(2+). It depends on Mn(2+) as a cofactor.

It catalyses the reaction NAD(+) + (deoxyribonucleotide)n-3'-hydroxyl + 5'-phospho-(deoxyribonucleotide)m = (deoxyribonucleotide)n+m + AMP + beta-nicotinamide D-nucleotide.. DNA ligase that catalyzes the formation of phosphodiester linkages between 5'-phosphoryl and 3'-hydroxyl groups in double-stranded DNA using NAD as a coenzyme and as the energy source for the reaction. It is essential for DNA replication and repair of damaged DNA. In Trichormus variabilis (strain ATCC 29413 / PCC 7937) (Anabaena variabilis), this protein is DNA ligase.